The primary structure comprises 271 residues: Cytochrome b termination protein 1 (271 aa).

It localises to the mitochondrion. Involved in 5'-end processing of mitochondrial COB, 15S rRNA, and RPM1 transcript. May also have a role in 3'-end processing of the COB pre-mRNA. The polypeptide is Cytochrome b termination protein 1 (CBT1) (Saccharomyces cerevisiae (strain ATCC 204508 / S288c) (Baker's yeast)).